The following is a 372-amino-acid chain: MTKRPEDTRVVVGMSGGVDSSVAALMLKEQGYDVIGIFMKNWDDTDENGVCTATEDYEDVIRVCNQIGIPYYAVNFEKQYWDKVFQYFLDEYKAGRTPNPDVMCNKEIKFKAFLEHALSLGADYLATGHYARVDRTGDEVKMLRGLDANKDQTYFLNQLTQEQLDKVMFPIGDLEKKRVRELAKEAELATATKKDSTGICFIGERNFKTFLSQYLPAQPGVMQTMDGEVKGEHDGLMYYTIGQRQGLGIGGSGDPWFVVGKDLEQNILFVEQGFHNPLLYSESISAVNISWTRPHIVGENGELTCTAKFRYRQEDHHVKVKMTGEQEAMVIFDEPVRAVTPGQAVVFYDGDECLGGGTIDDVFKDGQKLSYV.

Residues 13-20 (GMSGGVDS) and M39 contribute to the ATP site. Residues 99–101 (NPD) form an interaction with target base in tRNA region. The active-site Nucleophile is the C104. A disulfide bond links C104 and C200. ATP is bound at residue G128. Residues 150-152 (KDQ) are interaction with tRNA. C200 functions as the Cysteine persulfide intermediate in the catalytic mechanism. Residues 310-311 (RY) are interaction with tRNA.

The protein belongs to the MnmA/TRMU family.

The protein resides in the cytoplasm. The catalysed reaction is S-sulfanyl-L-cysteinyl-[protein] + uridine(34) in tRNA + AH2 + ATP = 2-thiouridine(34) in tRNA + L-cysteinyl-[protein] + A + AMP + diphosphate + H(+). Catalyzes the 2-thiolation of uridine at the wobble position (U34) of tRNA, leading to the formation of s(2)U34. The protein is tRNA-specific 2-thiouridylase MnmA of Bacillus pumilus (strain SAFR-032).